Consider the following 562-residue polypeptide: Phosphoglucomutase-1 (562 aa).

Position 1 is an N-acetylmethionine (Met-1). Lys-16 carries the post-translational modification N6-acetyllysine. Position 23 (Arg-23) interacts with alpha-D-glucose 1,6-bisphosphate. Thr-115 carries the phosphothreonine modification. An alpha-D-glucose 1,6-bisphosphate-binding site is contributed by Ser-117. The active-site Phosphoserine intermediate is Ser-117. Ser-117 lines the Mg(2+) pocket. Phosphoserine occurs at positions 117 and 134. Thr-185 carries the post-translational modification Phosphothreonine. A Phosphoserine modification is found at Ser-213. Asp-288, Asp-290, and Asp-292 together coordinate Mg(2+). 2 residues coordinate alpha-D-glucose 1,6-bisphosphate: Asp-292 and Arg-293. Lys-349 is subject to N6-acetyllysine. Tyr-353 carries the post-translational modification Phosphotyrosine. Position 357 (Thr-357) interacts with alpha-D-glucose 1,6-bisphosphate. Ser-369 is subject to Phosphoserine. Positions 376, 378, and 389 each coordinate alpha-D-glucose 1,6-bisphosphate. At Ser-378 the chain carries Phosphoserine. Residue Lys-419 is modified to N6-succinyllysine. Thr-467 carries the phosphothreonine; by PAK1 modification. 2 positions are modified to phosphoserine: Ser-485 and Ser-505. Thr-507 carries the post-translational modification Phosphothreonine. 2 positions are modified to phosphoserine: Ser-509 and Ser-541.

Belongs to the phosphohexose mutase family. As to quaternary structure, monomer. The cofactor is Mg(2+). Post-translationally, isoform 2 is the major calmodulin-dependent phosphoprotein in junctional skeletal sarcoplasmic reticulum vesicles. In terms of processing, phosphorylation at Thr-467 by PAK1 significantly enhances enzymatic activity.

The protein resides in the cytoplasm. It localises to the sarcoplasmic reticulum. The catalysed reaction is alpha-D-glucose 1-phosphate = alpha-D-glucose 6-phosphate. It carries out the reaction O-phospho-L-seryl-[protein] + alpha-D-glucose 1-phosphate = alpha-D-glucose 1,6-bisphosphate + L-seryl-[protein]. It catalyses the reaction alpha-D-glucose 1,6-bisphosphate + L-seryl-[protein] = O-phospho-L-seryl-[protein] + alpha-D-glucose 6-phosphate. Glucose-1,6-bisphosphate enhances phosphorylation of the active site Ser-117, and thereby increases enzyme activity. Its function is as follows. Catalyzes the reversible isomerization of alpha-D-glucose 1-phosphate to alpha-D-glucose 6-phosphate. The mechanism proceeds via the intermediate compound alpha-D-glucose 1,6-bisphosphate. This enzyme participates in both the breakdown and synthesis of glucose. The sequence is that of Phosphoglucomutase-1 (PGM1) from Oryctolagus cuniculus (Rabbit).